A 296-amino-acid chain; its full sequence is NAD kinase (296 aa).

The active-site Proton acceptor is the Asp-72. NAD(+) is bound by residues 72–73, 146–147, Arg-157, Lys-174, Asp-176, 187–192, and Gln-247; these read DG, ND, and TAYALS.

It belongs to the NAD kinase family. The cofactor is a divalent metal cation.

It is found in the cytoplasm. It carries out the reaction NAD(+) + ATP = ADP + NADP(+) + H(+). Functionally, involved in the regulation of the intracellular balance of NAD and NADP, and is a key enzyme in the biosynthesis of NADP. Catalyzes specifically the phosphorylation on 2'-hydroxyl of the adenosine moiety of NAD to yield NADP. The chain is NAD kinase from Pseudomonas fluorescens (strain Pf0-1).